The chain runs to 327 residues: Methionyl-tRNA formyltransferase (327 aa).

121–124 (SLLP) is a (6S)-5,6,7,8-tetrahydrofolate binding site.

Belongs to the Fmt family.

It carries out the reaction L-methionyl-tRNA(fMet) + (6R)-10-formyltetrahydrofolate = N-formyl-L-methionyl-tRNA(fMet) + (6S)-5,6,7,8-tetrahydrofolate + H(+). Attaches a formyl group to the free amino group of methionyl-tRNA(fMet). The formyl group appears to play a dual role in the initiator identity of N-formylmethionyl-tRNA by promoting its recognition by IF2 and preventing the misappropriation of this tRNA by the elongation apparatus. This Burkholderia pseudomallei (strain 1710b) protein is Methionyl-tRNA formyltransferase.